The primary structure comprises 1501 residues: Protein SNQ2 (1501 aa).

The span at 1–17 (MSNIKSTQDSSHNAVAR) shows a compositional bias: polar residues. The interval 1–56 (MSNIKSTQDSSHNAVARSSSASFAASEESFTGITHDKDEQSDTPADKLTKMLTGPA) is disordered. Serine 2 is modified (N-acetylserine). Low complexity predominate over residues 18–30 (SSSASFAASEESF). Residues serine 26 and serine 29 each carry the phosphoserine modification. The span at 34–49 (THDKDEQSDTPADKLT) shows a compositional bias: basic and acidic residues. Serine 64, serine 80, and serine 86 each carry phosphoserine. The ABC transporter 1 domain occupies 161–410 (FKGIKAKRHQ…FAKMGYLCPP (250 aa)). N-linked (GlcNAc...) asparagine glycosylation is found at asparagine 273, asparagine 334, and asparagine 518. A run of 5 helical transmembrane segments spans residues 521–541 (YTVI…SLFY), 554–574 (GGVL…NISF), 600–620 (LASF…LFFL), 628–648 (GSFF…NGLF), and 664–680 (ISGI…TYMI). Asparagine 730 is a glycosylation site (N-linked (GlcNAc...) asparagine). A helical transmembrane segment spans residues 771-789 (FGILWCFLLGYVVLKVIFT). The ABC transporter 2 domain maps to 853-1095 (FIWKDVCFTI…ILNYFERNGA (243 aa)). N-linked (GlcNAc...) asparagine glycosylation is present at asparagine 874. Residue 889–896 (GESGAGKT) coordinates ATP. The residue at position 1153 (threonine 1153) is a Phosphothreonine. 4 consecutive transmembrane segments (helical) span residues 1190 to 1212 (IMSK…FNVG), 1216 to 1236 (VGLQ…APAM), 1277 to 1296 (HLFF…RIFF), and 1333 to 1352 (ANVI…GVTQ). N-linked (GlcNAc...) asparagine glycosylation is present at asparagine 1401. A helical transmembrane segment spans residues 1455 to 1475 (FGIFWIYIFFNIIAMVCVYYL).

This sequence belongs to the ABC transporter superfamily. ABCG family. PDR (TC 3.A.1.205) subfamily.

It is found in the membrane. In terms of biological role, could be an ATP-dependent permease. Confers hyper-resistance to the mutagens 4-nitroquinoline-N-oxide (4-NQO) and triaziquone, as well as to the chemicals sulphomethuron methyl phenanthroline when present in multiple copies. Exhibits nucleoside triphosphatase activity. This is Protein SNQ2 (SNQ2) from Saccharomyces cerevisiae (strain ATCC 204508 / S288c) (Baker's yeast).